The chain runs to 450 residues: Probable malate:quinone oxidoreductase (450 aa).

This sequence belongs to the MQO family. FAD is required as a cofactor.

The catalysed reaction is (S)-malate + a quinone = a quinol + oxaloacetate. The protein operates within carbohydrate metabolism; tricarboxylic acid cycle; oxaloacetate from (S)-malate (quinone route): step 1/1. In Helicobacter acinonychis (strain Sheeba), this protein is Probable malate:quinone oxidoreductase.